Consider the following 480-residue polypeptide: UDP-N-acetylmuramate--L-alanine ligase (480 aa).

An ATP-binding site is contributed by 127-133 (GTHGKTT).

Belongs to the MurCDEF family.

The protein localises to the cytoplasm. It carries out the reaction UDP-N-acetyl-alpha-D-muramate + L-alanine + ATP = UDP-N-acetyl-alpha-D-muramoyl-L-alanine + ADP + phosphate + H(+). The protein operates within cell wall biogenesis; peptidoglycan biosynthesis. Cell wall formation. The sequence is that of UDP-N-acetylmuramate--L-alanine ligase from Blochmanniella floridana.